The primary structure comprises 77 residues: Translation initiation factor IF-1, chloroplastic (77 aa).

An S1-like domain is found at 1–72; sequence MNKQGLFQME…TKGRIVYRQR (72 aa).

The protein belongs to the IF-1 family. As to quaternary structure, component of the 30S ribosomal translation pre-initiation complex which assembles on the 30S ribosome in the order IF-2 and IF-3, IF-1 and N-formylmethionyl-tRNA(fMet); mRNA recruitment can occur at any time during PIC assembly.

It localises to the plastid. The protein localises to the chloroplast. Its function is as follows. One of the essential components for the initiation of protein synthesis. Stabilizes the binding of IF-2 and IF-3 on the 30S subunit to which N-formylmethionyl-tRNA(fMet) subsequently binds. Helps modulate mRNA selection, yielding the 30S pre-initiation complex (PIC). Upon addition of the 50S ribosomal subunit IF-1, IF-2 and IF-3 are released leaving the mature 70S translation initiation complex. This is Translation initiation factor IF-1, chloroplastic from Nephroselmis olivacea (Green alga).